A 660-amino-acid polypeptide reads, in one-letter code: Probable rhamnogalacturonate lyase B (660 aa).

Residues M1–A20 form the signal peptide. N-linked (GlcNAc...) asparagine glycans are attached at residues N22, N27, N109, N142, N238, N284, N432, N492, N532, N594, and N635.

Belongs to the polysaccharide lyase 4 family.

Its subcellular location is the secreted. It catalyses the reaction Endotype eliminative cleavage of L-alpha-rhamnopyranosyl-(1-&gt;4)-alpha-D-galactopyranosyluronic acid bonds of rhamnogalacturonan I domains in ramified hairy regions of pectin leaving L-rhamnopyranose at the reducing end and 4-deoxy-4,5-unsaturated D-galactopyranosyluronic acid at the non-reducing end.. Its function is as follows. Pectinolytic enzymes consist of four classes of enzymes: pectin lyase, polygalacturonase, pectin methylesterase and rhamnogalacturonase. Degrades the rhamnogalacturonan I (RG-I) backbone of pectin. In Aspergillus terreus (strain NIH 2624 / FGSC A1156), this protein is Probable rhamnogalacturonate lyase B (rglB).